A 207-amino-acid polypeptide reads, in one-letter code: Imidazoleglycerol-phosphate dehydratase (207 aa).

The protein belongs to the imidazoleglycerol-phosphate dehydratase family.

It localises to the cytoplasm. The catalysed reaction is D-erythro-1-(imidazol-4-yl)glycerol 3-phosphate = 3-(imidazol-4-yl)-2-oxopropyl phosphate + H2O. The protein operates within amino-acid biosynthesis; L-histidine biosynthesis; L-histidine from 5-phospho-alpha-D-ribose 1-diphosphate: step 6/9. The protein is Imidazoleglycerol-phosphate dehydratase of Mycobacterium avium (strain 104).